Reading from the N-terminus, the 158-residue chain is MVELLGIIRIRGWAKAPWYINETLNMLRLRYNFNTMVYPKTSQILGMLNKVSPYITWGEIDPDTLKLLIINRLETVKGDKVSDSYVKEVLKIENIDAMVKQLYEGKIYLHKLDEYFKLPIRLHPPRGGFKGSVKRPYKNKGEFGYRGDKINELMRRMV.

Belongs to the universal ribosomal protein uL30 family. As to quaternary structure, part of the 50S ribosomal subunit.

The sequence is that of Large ribosomal subunit protein uL30 from Saccharolobus solfataricus (strain ATCC 35092 / DSM 1617 / JCM 11322 / P2) (Sulfolobus solfataricus).